Here is a 50-residue protein sequence, read N- to C-terminus: Photosystem II reaction center protein K (50 aa).

Residues 1–13 (MLNLNFTNITVMG) constitute a propeptide that is removed on maturation. The helical transmembrane segment at 25–45 (IVDILPIIPILFFLLAFVWQA) threads the bilayer.

It belongs to the PsbK family. As to quaternary structure, PSII is composed of 1 copy each of membrane proteins PsbA, PsbB, PsbC, PsbD, PsbE, PsbF, PsbH, PsbI, PsbJ, PsbK, PsbL, PsbM, PsbT, PsbY, PsbZ, Psb30/Ycf12, at least 3 peripheral proteins of the oxygen-evolving complex and a large number of cofactors. It forms dimeric complexes.

The protein resides in the plastid. The protein localises to the chloroplast thylakoid membrane. Its function is as follows. One of the components of the core complex of photosystem II (PSII). PSII is a light-driven water:plastoquinone oxidoreductase that uses light energy to abstract electrons from H(2)O, generating O(2) and a proton gradient subsequently used for ATP formation. It consists of a core antenna complex that captures photons, and an electron transfer chain that converts photonic excitation into a charge separation. The polypeptide is Photosystem II reaction center protein K (Euglena myxocylindracea).